A 439-amino-acid polypeptide reads, in one-letter code: MEKTDLHVNLNEKVMVGPSLPLPKTTLQLSSIDNLPGVRGSIFNALLIYNASPSPTMVSADPAKLIREALAKILVYYPPFAGRLRETENGDLEVECTGEGAMFLEAMADNELSVLGDFDDSNPSFQQLLFSLPLDTNFKDLPLLVVQVTRFTCGGFVVGVSFHHGVCDGRGAAQFLKGLAEMARGEVKLSLEPIWNRELVKLDDPKYLQFFHFEFLRAPSIVEKIVQTYFIIDFETINYIKQSVMEECKEFCSSFEVASAMTWIARTRAFQIPESEYVKILFGMDMRNSFNPPLPSGYYGNSIGTACAVDNVQDLLSGSLLRAIMIIKKSKVSLNDNFKSRAVVKPSELDVNMNHENVVAFADWSRLGFDEVDFGWGNAVSVSPVQQQCELAMQNYFLFLKPSKNKPDGIKILMFLPLSKMKSFKIEMEAMMKKYVAKV.

Residues H164 and D373 each act as proton acceptor in the active site.

It belongs to the plant acyltransferase family.

It carries out the reaction taxa-4(20),11-dien-5alpha-ol + acetyl-CoA = taxa-4(20),11-dien-5alpha-yl acetate + CoA. Its pathway is alkaloid biosynthesis; taxol biosynthesis; 10-deacetyl-2-debenzoylbaccatin III from taxa-4(20),11-dien-5alpha-ol: step 1/3. The polypeptide is Taxadien-5-alpha-ol O-acetyltransferase (Taxus chinensis (Chinese yew)).